A 270-amino-acid polypeptide reads, in one-letter code: Bark lectin (270 aa).

The signal sequence occupies residues 1-15 (ISITFFLLLLNKVNS). N-linked (GlcNAc...) asparagine glycans are attached at residues Asn60, Asn76, and Asn127. Positions 141 and 143 each coordinate Mn(2+). Ca(2+) contacts are provided by Asp143, His145, Asn147, and Asp150. The Mn(2+) site is built by Asp150 and His155. The N-linked (GlcNAc...) asparagine glycan is linked to Asn201.

Belongs to the leguminous lectin family.

GalNAc-specific lectin. This is Bark lectin from Styphnolobium japonicum (Japanese pagoda tree).